A 156-amino-acid chain; its full sequence is Transcriptional repressor NrdR (156 aa).

The segment at 3-34 (CPFCQHGHSRVIDSRVIEAGSAIRRRRECSQC) is a zinc-finger region. The ATP-cone domain maps to 46–136 (LLVLKRNGVT…VYKSFESADD (91 aa)).

The protein belongs to the NrdR family. Zn(2+) serves as cofactor.

Its function is as follows. Negatively regulates transcription of bacterial ribonucleotide reductase nrd genes and operons by binding to NrdR-boxes. In Corynebacterium efficiens (strain DSM 44549 / YS-314 / AJ 12310 / JCM 11189 / NBRC 100395), this protein is Transcriptional repressor NrdR.